We begin with the raw amino-acid sequence, 213 residues long: Iron sulfur cluster assembly protein 1, mitochondrial (213 aa).

It belongs to the NifU family. Component of the core Fe-S cluster (ISC) assembly machinery. Requires [2Fe-2S] cluster as cofactor.

It localises to the mitochondrion matrix. The protein operates within cofactor biosynthesis; iron-sulfur cluster biosynthesis. Its function is as follows. Scaffold protein for the de novo synthesis of iron-sulfur (Fe-S) clusters within mitochondria, which is required for maturation of both mitochondrial and cytoplasmic [2Fe-2S] and [4Fe-4S] proteins. First, a [2Fe-2S] cluster is transiently assembled on the scaffold protein ISU1. In a second step, the cluster is released from ISU1, transferred to a glutaredoxin, followed by the formation of mitochondrial [2Fe-2S] proteins, the synthesis of [4Fe-4S] clusters and their target-specific insertion into the recipient apoproteins. Cluster assembly on ISU1 depends on the function of the cysteine desulfurase complex NFS1-ISD11, which serves as the sulfur donor for cluster synthesis, the iron-binding protein frataxin as the putative iron donor, and the electron transfer chain comprised of ferredoxin reductase and ferredoxin, which receive their electrons from NADH. This chain is Iron sulfur cluster assembly protein 1, mitochondrial (ISU1), found in Candida glabrata (strain ATCC 2001 / BCRC 20586 / JCM 3761 / NBRC 0622 / NRRL Y-65 / CBS 138) (Yeast).